Consider the following 367-residue polypeptide: MESDSEMVPFPQLPMPIENNYRACTIPYRFPSDDPKKATPNEISWINVFANSIPSFKKRAESDITVPDAPARAEKFAERYAGILEDLKKDPESHGGPPDGILLCRLREQVLRELGFRDIFKKVKDEENAKAISLFPQVVSLSDAIEDDGKRLENLVRGIFAGNIFDLGSAQLAEVFSRDGMSFLASCQNLVPRPWVIDDLENFQAKWINKSWKKAVIFVDNSGADIILGILPFARELLRRGAQVVLAANELPSINDITCTELTEILSQLKDENGQLLGVDTSKLLIANSGNDLPVIDLSRVSQELAYLSSDADLVIVEGMGRGIETNLYAQFKCDSLKIGMVKHLEVAEFLGGRLYDCVFKFNEVQS.

M1 carries the post-translational modification N-acetylmethionine. The Mn(2+) site is built by D220, N221, and D256. A Subfamily II EGMGR motif motif is present at residues 318 to 322; that stretch reads EGMGR.

It belongs to the damage-control phosphatase family. Phosphopantetheine phosphatase II subfamily. As to quaternary structure, multimer. It depends on Mn(2+) as a cofactor. The cofactor is Ni(2+).

With respect to regulation, activity is strongly promoted by Co(2+), Ni(2+), Mg(2+), Cu(2+) and Mn(2+). Activity is inhibited by EDTA. Metal-dependent phosphatase with probable damage-control functions. Shows phosphatase activity against several substrates, including sugar phosphates and p-nitrophenyl phosphate(pNPP). Prefers sugar phosphate substrates, including the extremely potent glycating agents ribose-5-phosphate and erythrose-4-phosphate. In Arabidopsis thaliana (Mouse-ear cress), this protein is Damage-control phosphatase At2g17340.